A 216-amino-acid polypeptide reads, in one-letter code: Squamosa promoter-binding-like protein 13 (216 aa).

Residues 32-110 (GDGGAALPSP…PSGGGGGPRC (79 aa)) are disordered. Positions 67–91 (SSSAAVAAGASSSSSSSSVAAAARR) are enriched in low complexity. Over residues 94–108 (GRAGGGAPSGGGGGP) the composition is skewed to gly residues. The SBP-type zinc-finger motif lies at 107-184 (GPRCQVERCG…AGHNERRRKS (78 aa)). Residues Cys110, Cys115, Cys132, His135, Cys151, Cys154, His158, and Cys170 each coordinate Zn(2+). The short motif at 167-183 (KRSCRRRLAGHNERRRK) is the Bipartite nuclear localization signal element. The tract at residues 175–216 (AGHNERRRKSAADTAHGENCRHADQDAGRSHQGTGNPPFQIR) is disordered. Residues 189 to 203 (AHGENCRHADQDAGR) are compositionally biased toward basic and acidic residues. The span at 205–216 (HQGTGNPPFQIR) shows a compositional bias: polar residues.

In terms of tissue distribution, ubiquitous.

The protein localises to the nucleus. Functionally, trans-acting factor that binds specifically to the consensus nucleotide sequence 5'-TNCGTACAA-3'. May be involved in panicle development. This Oryza sativa subsp. japonica (Rice) protein is Squamosa promoter-binding-like protein 13 (SPL13).